Here is a 622-residue protein sequence, read N- to C-terminus: Cilia- and flagella-associated protein 206 (622 aa).

Belongs to the CFAP206 family.

Its subcellular location is the cytoplasm. It is found in the cytoskeleton. The protein localises to the cilium axoneme. The protein resides in the cilium basal body. Its function is as follows. Essential for sperm motility and is involved in the regulation of the beating frequency of motile cilia on the epithelial cells of the respiratory tract. Required for the establishment of radial spokes in sperm flagella. In Bos taurus (Bovine), this protein is Cilia- and flagella-associated protein 206.